The following is a 372-amino-acid chain: Glutamate 5-kinase (372 aa).

Lysine 9 contacts ATP. Residues serine 49, aspartate 136, and asparagine 148 each coordinate substrate. ATP contacts are provided by residues 168-169 and 210-216; these read TD and TGGMKSK. Residues 276 to 353 enclose the PUA domain; that stretch reads AGSIEIDSGA…EEALSLTKRS (78 aa).

It belongs to the glutamate 5-kinase family.

The protein localises to the cytoplasm. It carries out the reaction L-glutamate + ATP = L-glutamyl 5-phosphate + ADP. It participates in amino-acid biosynthesis; L-proline biosynthesis; L-glutamate 5-semialdehyde from L-glutamate: step 1/2. In terms of biological role, catalyzes the transfer of a phosphate group to glutamate to form L-glutamate 5-phosphate. The polypeptide is Glutamate 5-kinase (Shouchella clausii (strain KSM-K16) (Alkalihalobacillus clausii)).